Here is a 224-residue protein sequence, read N- to C-terminus: Thiamine-phosphate synthase (224 aa).

4-amino-2-methyl-5-(diphosphooxymethyl)pyrimidine-binding positions include 44–48 (QFREK) and N79. Positions 80 and 99 each coordinate Mg(2+). S117 is a binding site for 4-amino-2-methyl-5-(diphosphooxymethyl)pyrimidine. Position 143-145 (143-145 (TET)) interacts with 2-[(2R,5Z)-2-carboxy-4-methylthiazol-5(2H)-ylidene]ethyl phosphate. 4-amino-2-methyl-5-(diphosphooxymethyl)pyrimidine is bound at residue K146. Residues G175 and 195-196 (IS) each bind 2-[(2R,5Z)-2-carboxy-4-methylthiazol-5(2H)-ylidene]ethyl phosphate.

The protein belongs to the thiamine-phosphate synthase family. The cofactor is Mg(2+).

It catalyses the reaction 2-[(2R,5Z)-2-carboxy-4-methylthiazol-5(2H)-ylidene]ethyl phosphate + 4-amino-2-methyl-5-(diphosphooxymethyl)pyrimidine + 2 H(+) = thiamine phosphate + CO2 + diphosphate. The catalysed reaction is 2-(2-carboxy-4-methylthiazol-5-yl)ethyl phosphate + 4-amino-2-methyl-5-(diphosphooxymethyl)pyrimidine + 2 H(+) = thiamine phosphate + CO2 + diphosphate. It carries out the reaction 4-methyl-5-(2-phosphooxyethyl)-thiazole + 4-amino-2-methyl-5-(diphosphooxymethyl)pyrimidine + H(+) = thiamine phosphate + diphosphate. The protein operates within cofactor biosynthesis; thiamine diphosphate biosynthesis; thiamine phosphate from 4-amino-2-methyl-5-diphosphomethylpyrimidine and 4-methyl-5-(2-phosphoethyl)-thiazole: step 1/1. Condenses 4-methyl-5-(beta-hydroxyethyl)thiazole monophosphate (THZ-P) and 2-methyl-4-amino-5-hydroxymethyl pyrimidine pyrophosphate (HMP-PP) to form thiamine monophosphate (TMP). This Bacillus velezensis (strain DSM 23117 / BGSC 10A6 / LMG 26770 / FZB42) (Bacillus amyloliquefaciens subsp. plantarum) protein is Thiamine-phosphate synthase.